The primary structure comprises 295 residues: Nucleotide-binding protein BPUM_3115 (295 aa).

Glycine 16–threonine 23 lines the ATP pocket. Aspartate 67–glycine 70 contributes to the GTP binding site.

It belongs to the RapZ-like family.

Displays ATPase and GTPase activities. The sequence is that of Nucleotide-binding protein BPUM_3115 from Bacillus pumilus (strain SAFR-032).